The primary structure comprises 158 residues: SsrA-binding protein (158 aa).

The segment covering Lys133–Gln147 has biased composition (basic and acidic residues). The tract at residues Lys133–Glu158 is disordered.

Belongs to the SmpB family.

The protein resides in the cytoplasm. In terms of biological role, required for rescue of stalled ribosomes mediated by trans-translation. Binds to transfer-messenger RNA (tmRNA), required for stable association of tmRNA with ribosomes. tmRNA and SmpB together mimic tRNA shape, replacing the anticodon stem-loop with SmpB. tmRNA is encoded by the ssrA gene; the 2 termini fold to resemble tRNA(Ala) and it encodes a 'tag peptide', a short internal open reading frame. During trans-translation Ala-aminoacylated tmRNA acts like a tRNA, entering the A-site of stalled ribosomes, displacing the stalled mRNA. The ribosome then switches to translate the ORF on the tmRNA; the nascent peptide is terminated with the 'tag peptide' encoded by the tmRNA and targeted for degradation. The ribosome is freed to recommence translation, which seems to be the essential function of trans-translation. The chain is SsrA-binding protein from Leifsonia xyli subsp. xyli (strain CTCB07).